Reading from the N-terminus, the 451-residue chain is Trigger factor (451 aa).

Residues 173 to 258 enclose the PPIase FKBP-type domain; that stretch reads GDRVTLDFVG…LKKIEWAHLP (86 aa).

It belongs to the FKBP-type PPIase family. Tig subfamily.

The protein localises to the cytoplasm. It catalyses the reaction [protein]-peptidylproline (omega=180) = [protein]-peptidylproline (omega=0). Functionally, involved in protein export. Acts as a chaperone by maintaining the newly synthesized protein in an open conformation. Functions as a peptidyl-prolyl cis-trans isomerase. This is Trigger factor from Cupriavidus pinatubonensis (strain JMP 134 / LMG 1197) (Cupriavidus necator (strain JMP 134)).